The primary structure comprises 195 residues: Probable septum site-determining protein MinC (195 aa).

This sequence belongs to the MinC family. As to quaternary structure, interacts with MinD and FtsZ.

In terms of biological role, cell division inhibitor that blocks the formation of polar Z ring septums. Rapidly oscillates between the poles of the cell to destabilize FtsZ filaments that have formed before they mature into polar Z rings. Prevents FtsZ polymerization. This Helicobacter pylori (strain P12) protein is Probable septum site-determining protein MinC.